A 264-amino-acid polypeptide reads, in one-letter code: MLFDWFTFWAQLLNFLILVWLLKRFLYRPVLEAIDEREKKISGELRDADEGRKQAEQAIREWQEKMSRLDAQAAGMLETARKEAGEEKKRLQGEARREYDELRGRLRESLHEEQAALGRTIAGRIRAEVFRVSDSVLNSLADSGLQAQMARAFSGRLSEGGTEVEELLKSGGTPLVLRSGFEMGEEEKELVRKTLADRFGYKGRLDFMTEESYRGGIALEQGGRSIEWSVNSRLEAIDEASSALLDGPDDEMNEEEGHAGKDAD.

The helical transmembrane segment at 2 to 22 (LFDWFTFWAQLLNFLILVWLL) threads the bilayer. The tract at residues 240-264 (ASSALLDGPDDEMNEEEGHAGKDAD) is disordered. A compositionally biased stretch (basic and acidic residues) spans 255-264 (EEGHAGKDAD).

The protein belongs to the ATPase B chain family. In terms of assembly, F-type ATPases have 2 components, F(1) - the catalytic core - and F(0) - the membrane proton channel. F(1) has five subunits: alpha(3), beta(3), gamma(1), delta(1), epsilon(1). F(0) has four main subunits: a(1), b(2) and c(10-14). The alpha and beta chains form an alternating ring which encloses part of the gamma chain. F(1) is attached to F(0) by a central stalk formed by the gamma and epsilon chains, while a peripheral stalk is formed by the delta and b chains.

The protein localises to the cell inner membrane. Its function is as follows. F(1)F(0) ATP synthase produces ATP from ADP in the presence of a proton or sodium gradient. F-type ATPases consist of two structural domains, F(1) containing the extramembraneous catalytic core and F(0) containing the membrane proton channel, linked together by a central stalk and a peripheral stalk. During catalysis, ATP synthesis in the catalytic domain of F(1) is coupled via a rotary mechanism of the central stalk subunits to proton translocation. In terms of biological role, component of the F(0) channel, it forms part of the peripheral stalk, linking F(1) to F(0). This Chlorobium luteolum (strain DSM 273 / BCRC 81028 / 2530) (Pelodictyon luteolum) protein is ATP synthase subunit b 1.